A 592-amino-acid polypeptide reads, in one-letter code: MRSHYCGDVNKSHVGQEVTLVGWVNRSRDLGGVVFLDLRDREGLIQVVYDPDLPEVFNVASTLRAEFCVQVKGLVRARPDSQVNGQMKTGEIEVLGQALTIINAADPLPLSMDNYQNNSEEQRLKYRYLDLRRPEMAQRLIFRAKVTSSVRRFLDSNGFLDIETPILTKATPEGARDYLVPSRTYKGQFFALPQSPQLFKQLLMMSGFDRYYQIVKCFRDEDLRADRQPEFTQIDIETSFMSSEQVMAKTEEMMRGLFLEMLNVDLGEFPRMTYNEAMRRFGSDKPDLRNPLELVDIADLLKEVEFAVFSGPANDEEGRVAALRIPGGAALSRKQIDDYTKFVGIYGAKGLAWMKINDLSLGLEGIQSPVLKFLNESIVNEIVSRTGAQTGDIILFGADQATVVAESMGALRLKAGEDFNLLQGEWRPLWVVDFPMFEKINGNFHAVHHPFTAPRGVTAAELEANPANRVSDAYDMVLNGCELGGGSVRIHNQEMQSAVFRILGITDEEAKEKFGFLLEALRYGTPPHAGLAFGLDRIIMLMTGASSIRDVMAFPKTTTAACPLTNAPGFANPQQLAELGIAVVEKAVKTED.

Glutamate 173 is a binding site for L-aspartate. The tract at residues 197 to 200 (QLFK) is aspartate. An L-aspartate-binding site is contributed by arginine 219. ATP-binding positions include 219-221 (RDE) and glutamine 228. L-aspartate is bound at residue histidine 448. Glutamate 482 contacts ATP. Arginine 489 is a binding site for L-aspartate. 534-537 (GLDR) contacts ATP.

This sequence belongs to the class-II aminoacyl-tRNA synthetase family. Type 1 subfamily. As to quaternary structure, homodimer.

Its subcellular location is the cytoplasm. The enzyme catalyses tRNA(Asp) + L-aspartate + ATP = L-aspartyl-tRNA(Asp) + AMP + diphosphate. Its function is as follows. Catalyzes the attachment of L-aspartate to tRNA(Asp) in a two-step reaction: L-aspartate is first activated by ATP to form Asp-AMP and then transferred to the acceptor end of tRNA(Asp). The sequence is that of Aspartate--tRNA ligase from Shewanella baltica (strain OS223).